The following is a 218-amino-acid chain: Large ribosomal subunit protein uL3 (218 aa).

At Gln-154 the chain carries N5-methylglutamine.

It belongs to the universal ribosomal protein uL3 family. As to quaternary structure, part of the 50S ribosomal subunit. Forms a cluster with proteins L14 and L19. Methylated by PrmB.

One of the primary rRNA binding proteins, it binds directly near the 3'-end of the 23S rRNA, where it nucleates assembly of the 50S subunit. The sequence is that of Large ribosomal subunit protein uL3 from Polynucleobacter asymbioticus (strain DSM 18221 / CIP 109841 / QLW-P1DMWA-1) (Polynucleobacter necessarius subsp. asymbioticus).